Reading from the N-terminus, the 276-residue chain is Undecaprenyl-diphosphatase 1 (276 aa).

The next 6 membrane-spanning stretches (helical) occupy residues 44 to 63, 85 to 105, 109 to 129, 183 to 203, 214 to 234, and 249 to 269; these read ALAF…IWEY, VNLL…ADLI, LFNP…MLWA, AATE…AVYS, GDFA…MLAV, and FAWY…LGMI.

The protein belongs to the UppP family.

Its subcellular location is the cell inner membrane. The catalysed reaction is di-trans,octa-cis-undecaprenyl diphosphate + H2O = di-trans,octa-cis-undecaprenyl phosphate + phosphate + H(+). In terms of biological role, catalyzes the dephosphorylation of undecaprenyl diphosphate (UPP). Confers resistance to bacitracin. This chain is Undecaprenyl-diphosphatase 1, found in Stutzerimonas stutzeri (strain A1501) (Pseudomonas stutzeri).